The sequence spans 112 residues: Elongin-C (112 aa).

It belongs to the SKP1 family. Heterotrimer of an A (ELOA, ELOA2 or ELOA3P), ELOB and ELOC subunit. The elongin BC complex interacts with EPOP; leading to recruit the elongin BC complex to Polycomb group (PcG) target genes, thereby restricting excessive activity of the PRC2/EED-EZH2 complex. Component of multiple cullin-RING E3 ubiquitin-protein ligase complexes composed of Elongin BC (ELOB and ELOC), a cullin (CUL2 or CUL5), a catalytic subunit (RBX1 or RNF7/RBX2), as well as a substrate adapter protein that can be either ASB2, ASB9, ASB11, KLHDC2, KLHDC3, KLHDC10, APPBP2, FEM1A, FEM1B, FEM1C, LRR1, PCMTD1, SOCS1, SOCS2, SOCS5, SPSB1, SPSB3, ELOA, VHL, WSB1, ZYG11B or RAB40C. Interacts with TMF1. As part of the Elongin BC E3 ubiquitin ligase complex; interacts with NRBP1. May form oligomers as a KLHDC2/KLHDC3-ELOB-ELOC complex; this interaction is autoinhibitory for the E3 ligase complex as the substrate-binding site of KLHDC2/KLHDC3 is blocked in the oligomer. In terms of processing, ubiquitinated by the DCX(AMBRA1) complex, leading to its degradation by the proteasome.

Its subcellular location is the nucleus. It participates in protein modification; protein ubiquitination. SIII, also known as elongin, is a general transcription elongation factor that increases the RNA polymerase II transcription elongation past template-encoded arresting sites. Subunit A is transcriptionally active and its transcription activity is strongly enhanced by binding to the dimeric complex of the SIII regulatory subunits B and C (elongin BC complex). In embryonic stem cells, the elongin BC complex is recruited by EPOP to Polycomb group (PcG) target genes in order generate genomic region that display both active and repressive chromatin properties, an important feature of pluripotent stem cells. Its function is as follows. Core component of multiple cullin-RING-based ECS (ElonginB/C-CUL2/5-SOCS-box protein) E3 ubiquitin-protein ligase complexes, which mediate the ubiquitination of target proteins. By binding to BC-box motifs it seems to link target recruitment subunits, like VHL and members of the SOCS box family, to Cullin/RBX1 modules that activate E2 ubiquitination enzymes. Component the von Hippel-Lindau ubiquitination complex CBC(VHL). A number of ECS complexes (containing either KLHDC2, KLHDC3, KLHDC10, APPBP2, FEM1A, FEM1B or FEM1C as substrate-recognition component) are part of the DesCEND (destruction via C-end degrons) pathway, which recognizes a C-degron located at the extreme C terminus of target proteins, leading to their ubiquitination and degradation. The ECS(ASB9) complex mediates ubiquitination and degradation of CKB. As part of a multisubunit ubiquitin ligase complex, polyubiquitinates monoubiquitinated POLR2A. ECS(LRR1) ubiquitinates MCM7 and promotes CMG replisome disassembly by VCP and chromatin extraction during S-phase. As part of the ECS(RAB40C) complex, mediates ANKRD28 ubiquitination and degradation, thereby inhibiting protein phosphatase 6 (PP6) complex activity and focal adhesion assembly during cell migration. This Bos taurus (Bovine) protein is Elongin-C (ELOC).